The following is a 176-amino-acid chain: NAD(P)H-quinone oxidoreductase subunit 6, chloroplastic (176 aa).

5 consecutive transmembrane segments (helical) span residues 10–30 (ILLV…VLFT), 32–52 (PIYS…FYIP), 61–81 (AQLL…VMFM), 90–112 (FHLW…FSLI), and 152–172 (FYLP…GAIA).

This sequence belongs to the complex I subunit 6 family. NDH is composed of at least 16 different subunits, 5 of which are encoded in the nucleus.

The protein resides in the plastid. The protein localises to the chloroplast thylakoid membrane. It catalyses the reaction a plastoquinone + NADH + (n+1) H(+)(in) = a plastoquinol + NAD(+) + n H(+)(out). The catalysed reaction is a plastoquinone + NADPH + (n+1) H(+)(in) = a plastoquinol + NADP(+) + n H(+)(out). Its function is as follows. NDH shuttles electrons from NAD(P)H:plastoquinone, via FMN and iron-sulfur (Fe-S) centers, to quinones in the photosynthetic chain and possibly in a chloroplast respiratory chain. The immediate electron acceptor for the enzyme in this species is believed to be plastoquinone. Couples the redox reaction to proton translocation, and thus conserves the redox energy in a proton gradient. This is NAD(P)H-quinone oxidoreductase subunit 6, chloroplastic (ndhG) from Ceratophyllum demersum (Rigid hornwort).